Consider the following 194-residue polypeptide: Orotate phosphoribosyltransferase (194 aa).

Residue 116–124 participates in 5-phospho-alpha-D-ribose 1-diphosphate binding; the sequence is EDIVTTGLS. Residues Thr120 and Arg148 each contribute to the orotate site.

This sequence belongs to the purine/pyrimidine phosphoribosyltransferase family. PyrE subfamily. Homodimer. It depends on Mg(2+) as a cofactor.

The enzyme catalyses orotidine 5'-phosphate + diphosphate = orotate + 5-phospho-alpha-D-ribose 1-diphosphate. It participates in pyrimidine metabolism; UMP biosynthesis via de novo pathway; UMP from orotate: step 1/2. Its function is as follows. Catalyzes the transfer of a ribosyl phosphate group from 5-phosphoribose 1-diphosphate to orotate, leading to the formation of orotidine monophosphate (OMP). In Caulobacter vibrioides (strain ATCC 19089 / CIP 103742 / CB 15) (Caulobacter crescentus), this protein is Orotate phosphoribosyltransferase.